Reading from the N-terminus, the 312-residue chain is Glycine--tRNA ligase alpha subunit (312 aa).

It belongs to the class-II aminoacyl-tRNA synthetase family. Tetramer of two alpha and two beta subunits.

It localises to the cytoplasm. It catalyses the reaction tRNA(Gly) + glycine + ATP = glycyl-tRNA(Gly) + AMP + diphosphate. This is Glycine--tRNA ligase alpha subunit from Methylobacillus flagellatus (strain ATCC 51484 / DSM 6875 / VKM B-1610 / KT).